The chain runs to 209 residues: Cyclin-dependent kinase inhibitor 2 (209 aa).

The required for nuclear localization stretch occupies residues 1-32 (MAAVRRRERDVVEENGVTTTTVKRRKMEEEVD).

It belongs to the CDI family. ICK/KRP subfamily. Specifically interacts with CDKA-1, but not with CDKB1-1. In terms of processing, phosphorylated.

The protein resides in the nucleus. The protein localises to the nucleoplasm. Its function is as follows. Binds and inhibits CYCD2-1/CDKA-1 complex kinase activity. Regulates cell division which is crucial for plant growth, development and morphogenesis. May regulate early lateral root initiation by blocking the G1/S phase transition. Controls the mitosis-to-endocycle transition and the onset of the endoreduplication cycle during leaf development through inhibition of mitotic CDKA-1 kinase complexes. Specifically targets CDKA-1. This chain is Cyclin-dependent kinase inhibitor 2 (KRP2), found in Arabidopsis thaliana (Mouse-ear cress).